Here is a 250-residue protein sequence, read N- to C-terminus: DSC E3 ubiquitin ligase complex subunit 3 (250 aa).

The tract at residues 105-130 (LASQDQAQSGLNSNSESPDDLQNAQT) is disordered. A compositionally biased stretch (polar residues) spans 107 to 130 (SQDQAQSGLNSNSESPDDLQNAQT). Asparagine 187 is a glycosylation site (N-linked (GlcNAc...) asparagine). 2 helical membrane passes run 199-219 (TLLA…YFLW) and 228-248 (MQLS…LHSY).

This sequence belongs to the dsc3 family. Component of the DSC E3 ubiquitin ligase complex composed of dsc1, dsc2, dsc3 and dsc4.

The protein localises to the endoplasmic reticulum membrane. The protein resides in the golgi apparatus membrane. It participates in protein modification; protein ubiquitination. Component of the DSC E3 ubiquitin ligase complex which is required for the sre1 transcriptional activator proteolytic cleavage to release the soluble transcription factor from the membrane in low oxygen or sterol conditions. The complex also plays an important role in the multivesicular body (MVB) pathway and functions in a post-endoplasmic reticulum pathway for protein degradation. The protein is DSC E3 ubiquitin ligase complex subunit 3 (dsc3) of Schizosaccharomyces pombe (strain 972 / ATCC 24843) (Fission yeast).